Here is a 389-residue protein sequence, read N- to C-terminus: Radial spoke head protein 3 homolog B (389 aa).

Positions 63-106 (PTGQVPGQPDPLELQRQQQARRRALARKRAQEQLKPRTPEPVEG) are disordered. Positions 81 to 90 (QARRRALARK) are enriched in basic residues. The span at 91-106 (RAQEQLKPRTPEPVEG) shows a compositional bias: basic and acidic residues. Position 143 is a phosphothreonine; by MAPK1 (Thr-143). A coiled-coil region spans residues 206–242 (YEEIRNVELAEVQRLEEQERRHREEKERRKKQQWEIV). Positions 332 to 389 (EAMPPGQKTNVINGPNTVTDPSVTTLHTQKPVLDRVSSQPAPSQERKPVEEGGHLMAE) are disordered. The span at 338–359 (QKTNVINGPNTVTDPSVTTLHT) shows a compositional bias: polar residues. Residues 375–389 (QERKPVEEGGHLMAE) show a composition bias toward basic and acidic residues.

Belongs to the flagellar radial spoke RSP3 family. In terms of assembly, component of the axonemal radial spoke 1 (RS1) and 2 (RS2) complexes, at least composed of spoke head proteins RSPH1, RSPH3B, RSPH9 and the cilia-specific component RSPH4A or sperm-specific component RSPH6A, spoke stalk proteins RSPH14, DNAJB13, DYDC1, ROPN1L and NME5, and the RS1 complex-specific anchor protein IQUB. Interacts with IQUB. Interacts with phosphorylated MAPK1. Interacts with MEK1. Interacts with PKA regulatory subunits PRKAR1A and PRKAR1B. Interacts with RSPH1. Interacts with RSPH4A. Interacts with RSPH6A. Interacts with RSPH9. Interacts with LRRC23. Expressed in ependymal cells (at protein level).

The protein resides in the cytoplasm. It is found in the cytoskeleton. The protein localises to the cilium axoneme. Its subcellular location is the flagellum axoneme. In terms of biological role, functions as part of axonemal radial spoke complexes that play an important part in the motility of sperm and cilia. Functions as a protein kinase A-anchoring protein that scaffolds the cAMP-dependent protein kinase holoenzyme. May serve as a point of convergence for MAPK and PKA signaling in cilia. The polypeptide is Radial spoke head protein 3 homolog B (Rsph3b) (Mus musculus (Mouse)).